The following is a 507-amino-acid chain: Cytochrome P450 monooxygenase helB2 (507 aa).

The signal sequence occupies residues 1–22 (MALPIILCLAVILWTSWRLLDA). Residue Cys-436 participates in heme binding.

This sequence belongs to the cytochrome P450 family. Heme is required as a cofactor.

Its pathway is mycotoxin biosynthesis. Cytochrome P450 monooxygenase; part of the gene cluster that mediates the biosynthesis of helvolic acid, an antibacterial nortriterpenoid. Protostadienol synthase helA cyclizes (3S)-oxidosqualene to (17Z)-protosta-17(20),24-dien-3-beta-ol (protostadienol). The synthesis of protostadienol is followed by several steps of monooxygenation, dehydrogenation, and acyl transfer to yield the final helvolic acid. Following the cyclization to the tetracyclic protostadienol by helA, cytochrome P450 monooxygenases helB1-mediated and helB2-mediated oxidation at C-4 and C-16, acyltransferase helD2-dependent acetylation of 16-OH, oxidation of C-21 by cytochrome P450 monooxygenase helB4, and short chain dehydrogenase helC-dependent oxidative decarboxylation yield the fusidane skeleton. This intermediate is further modified in three additional steps mediated by the cytochrome P450 monooxygenase helB3, the acyltransferase helD1, and the 3-ketosteroid 1-dehydrogenase helE to give helvolic acid. Compared with the late stages in the biosynthesis of helvolic acid, enzymes involved in the early stage modifications act in a relatively strict order. The hydroxylation of C-16 by helB1 and subsequent acetylation by helD2 should occur before the helB3-mediated oxidation of C-21. C-4 demethylation in fusidane-type antibiotics proceeds in an unusual manner though it is also achieved by oxidative decarboxylation. The methyl group at C-4 beta position is oxidized by helB1 and subsequently removed by the short chain dehydrogenase helC. This chain is Cytochrome P450 monooxygenase helB2, found in Aspergillus fumigatus (strain ATCC MYA-4609 / CBS 101355 / FGSC A1100 / Af293) (Neosartorya fumigata).